The following is a 615-amino-acid chain: MPQLQYPECYLAPNRCLVSNCGVNKMSNEELVGQNHGMEGEACTGEDVTFSDVAIDFSHEEWGWLNSAQRDLYKDVMVQNYENLVSVAGLSVTKPHVITLLEDGKEPWMMEKKLSKGLIPDWESRWENKELSTKKDIYDEDSPQTVIIEKVVKQSYEFSNSKMNLEYTEKLEGKHGSQVDHFRPAILTSRESPIADSVYKYNIFRSTFHSKSTLSEPQKISAEGNSYKYDILKKNLPKKSVIKNEKVNGGKKLLNSNKSGAAFSQGKSLALPQTCNREKIYTCSECGKAFGKQSILNRHWRIHTGEKPYECRECGKTFSHGSSLTRHLISHSGEKPYKCIECGKAFSHVSSLTNHQSTHTGEKPYECMNCGKSFSRVSHLIEHLRIHTQEKLYECRICGKAFIHRSSLIHHQKIHTGEKPYECRECGKAFCCSSHLTRHQRIHTMEKQYECNKCLKVFSSLSFLVQHQSIHTEEKPFECQKCRKSFNQLESLNMHLRNHIRLKPYECSICGKAFSHRSSLLQHHRIHTGEKPYECIKCGKTFSCSSNLTVHQRIHTGEKPYKCNECGKAFSKGSNLTAHQRVHNGEKPNSVVSVEKPLDHMNHYTCEKSYRRETI.

The KRAB domain maps to 48–120 (VTFSDVAIDF…EKKLSKGLIP (73 aa)). Residues Lys-153 and Lys-170 each participate in a glycyl lysine isopeptide (Lys-Gly) (interchain with G-Cter in SUMO2) cross-link. 11 C2H2-type zinc fingers span residues 281 to 303 (YTCSECGKAFGKQSILNRHWRIH), 309 to 331 (YECRECGKTFSHGSSLTRHLISH), 337 to 359 (YKCIECGKAFSHVSSLTNHQSTH), 365 to 387 (YECMNCGKSFSRVSHLIEHLRIH), 393 to 415 (YECRICGKAFIHRSSLIHHQKIH), 421 to 443 (YECRECGKAFCCSSHLTRHQRIH), 449 to 471 (YECNKCLKVFSSLSFLVQHQSIH), 477 to 499 (FECQKCRKSFNQLESLNMHLRNH), 505 to 527 (YECSICGKAFSHRSSLLQHHRIH), 533 to 555 (YECIKCGKTFSCSSNLTVHQRIH), and 561 to 583 (YKCNECGKAFSKGSNLTAHQRVH).

This sequence belongs to the krueppel C2H2-type zinc-finger protein family.

The protein resides in the nucleus. Functionally, may be involved in transcriptional regulation. The chain is Zinc finger protein 181 (ZNF181) from Pongo abelii (Sumatran orangutan).